We begin with the raw amino-acid sequence, 308 residues long: MAGFTAADVKKLREMSGAGMMDAKKALEETGGDLEAAVDALRAKGLAAVQKKSSRTAAEGLVGVAVEGTKGVAVEVNSETDFVAKNDQFQDFVRKTTAVALTIDGDDVEALKAADYPDGGTVTDKLTNNVATIGENQQVRRMKTVTVSQGVVVPYVHNAVAPNLGKIGVLVALESDASADVLEPLGKQLAMHIAAAFPQALDADGLDADLIERERKIAAEKAAESGKPENVQEKMVEGAIKKFAKENALLSQVFVMDNKTAIADVVLAAGKDAGTTITLKDYVRFQLGEGIEKEESDFAAEVAAAVKG.

Residues 80-83 are involved in Mg(2+) ion dislocation from EF-Tu; the sequence is TDFV.

It belongs to the EF-Ts family.

Its subcellular location is the cytoplasm. In terms of biological role, associates with the EF-Tu.GDP complex and induces the exchange of GDP to GTP. It remains bound to the aminoacyl-tRNA.EF-Tu.GTP complex up to the GTP hydrolysis stage on the ribosome. The chain is Elongation factor Ts from Erythrobacter litoralis (strain HTCC2594).